Reading from the N-terminus, the 159-residue chain is Ribosome maturation factor RimP (159 aa).

The protein belongs to the RimP family.

It is found in the cytoplasm. Its function is as follows. Required for maturation of 30S ribosomal subunits. This is Ribosome maturation factor RimP from Streptococcus agalactiae serotype III (strain NEM316).